The following is a 547-amino-acid chain: Serine beta-lactamase-like protein LACTB, mitochondrial (547 aa).

Residues 1–115 constitute a mitochondrion transit peptide; that stretch reads MYRLMSAVTA…RAIESSRDLL (115 aa). Low complexity predominate over residues 62–83; sequence GAAPAQSPAAPDPEASPLAEPP. The tract at residues 62-96 is disordered; the sequence is GAAPAQSPAAPDPEASPLAEPPQEQSLAPWSPQTP. Catalysis depends on serine 164, which acts as the Acyl-ester intermediate. N6-succinyllysine occurs at positions 283 and 284. N6-acetyllysine occurs at positions 297 and 342.

This sequence belongs to the peptidase S12 family. In terms of tissue distribution, expressed predominantly in skeletal muscle.

It localises to the mitochondrion. Its function is as follows. Mitochondrial serine protease that acts as a regulator of mitochondrial lipid metabolism. Acts by decreasing protein levels of PISD, a mitochondrial enzyme that converts phosphatidylserine (PtdSer) to phosphatidylethanolamine (PtdEtn), thereby affecting mitochondrial lipid metabolism. It is unclear whether it acts directly by mediating proteolysis of PISD or by mediating proteolysis of another lipid metabolism protein. Acts as a tumor suppressor that has the ability to inhibit proliferation of multiple types of breast cancer cells: probably by promoting decreased levels of PISD, thereby affecting mitochondrial lipid metabolism. The sequence is that of Serine beta-lactamase-like protein LACTB, mitochondrial from Homo sapiens (Human).